Here is a 146-residue protein sequence, read N- to C-terminus: Hemoglobin subunit beta (146 aa).

Valine 1 carries the N-acetylvaline modification. One can recognise a Globin domain in the interval 2-146 (HLTADEKSAV…VATALGHKYH (145 aa)). Threonine 12 carries the phosphothreonine modification. Serine 44 is subject to Phosphoserine. Residue lysine 59 is modified to N6-acetyllysine. Histidine 63 provides a ligand contact to heme b. Lysine 82 carries the post-translational modification N6-acetyllysine. Histidine 92 lines the heme b pocket. The residue at position 93 (cysteine 93) is an S-nitrosocysteine. At lysine 144 the chain carries N6-acetyllysine.

Belongs to the globin family. In terms of assembly, heterotetramer of two alpha chains and two beta chains. Red blood cells.

In terms of biological role, involved in oxygen transport from the lung to the various peripheral tissues. This is Hemoglobin subunit beta (HBB) from Antrozous pallidus (Pallid bat).